A 366-amino-acid polypeptide reads, in one-letter code: Chorismate synthase (366 aa).

Residues Arg48 and Arg54 each contribute to the NADP(+) site. FMN-binding positions include 125-127 (RSS), 238-239 (NA), Gly278, 293-297 (KPTSS), and Arg319.

Belongs to the chorismate synthase family. As to quaternary structure, homotetramer. It depends on FMNH2 as a cofactor.

The enzyme catalyses 5-O-(1-carboxyvinyl)-3-phosphoshikimate = chorismate + phosphate. The protein operates within metabolic intermediate biosynthesis; chorismate biosynthesis; chorismate from D-erythrose 4-phosphate and phosphoenolpyruvate: step 7/7. Catalyzes the anti-1,4-elimination of the C-3 phosphate and the C-6 proR hydrogen from 5-enolpyruvylshikimate-3-phosphate (EPSP) to yield chorismate, which is the branch point compound that serves as the starting substrate for the three terminal pathways of aromatic amino acid biosynthesis. This reaction introduces a second double bond into the aromatic ring system. The protein is Chorismate synthase of Cellvibrio japonicus (strain Ueda107) (Pseudomonas fluorescens subsp. cellulosa).